The primary structure comprises 171 residues: Large ribosomal subunit protein bL9 (171 aa).

It belongs to the bacterial ribosomal protein bL9 family.

Binds to the 23S rRNA. The chain is Large ribosomal subunit protein bL9 from Rickettsia akari (strain Hartford).